Consider the following 353-residue polypeptide: Inactive ubiquitin thioesterase OTULINL (353 aa).

The segment at Met1–Lys80 is required for membrane binding. Residues Lys125–Phe353 enclose the OTU domain.

It belongs to the peptidase C65 family. Otulin subfamily. Does not bind ubiquitin or ubiquitin-like proteins.

The protein localises to the cytoplasm. Its subcellular location is the endoplasmic reticulum membrane. It localises to the nucleus envelope. Lacks deubiquitinase activity. This chain is Inactive ubiquitin thioesterase OTULINL, found in Mus musculus (Mouse).